The following is a 466-amino-acid chain: MVLLSENASEGSNCTHPPAQVNISKAILLGVILGGLIIFGVLGNILVILSVACHRHLHSVTHYYIVNLAVADLLLTSTVLPFSAIFEILGYWAFGRVFCNIWAAVDVLCCTASIMGLCIISIDRYIGVSYPLRYPTIVTQRRGVRALLCVWALSLVISIGPLFGWRQQAPEDETICQINEEPGYVLFSALGSFYVPLTIILVMYCRVYVVAKRESRGLKSGLKTDKSDSEQVTLRIHRKNVPAEGSGVSSAKNKTHFSVRLLKFSREKKAAKTLGIVVGCFVLCWLPFFLVMPIGSFFPNFKPPETVFKIVFWLGYLNSCINPIIYPCSSQEFKKAFQNVLRIQCLRRRQSSKHALGYTLHPPSQAVEGQHRGMVRIPVGSGETFYKISKTDGVREWKFFSSMPQGSARITMPKDQSACTTARVRSKSFLQVCCCVGSSTPRPEENHQVPTIKIHTISLGENGEEV.

At 1 to 27 (MVLLSENASEGSNCTHPPAQVNISKAI) the chain is on the extracellular side. Residues asparagine 7, asparagine 13, and asparagine 22 are each glycosylated (N-linked (GlcNAc...) asparagine). The chain crosses the membrane as a helical span at residues 28-51 (LLGVILGGLIIFGVLGNILVILSV). Topologically, residues 52-64 (ACHRHLHSVTHYY) are cytoplasmic. The helical transmembrane segment at 65-88 (IVNLAVADLLLTSTVLPFSAIFEI) threads the bilayer. Residues 89–99 (LGYWAFGRVFC) are Extracellular-facing. Cysteine 99 and cysteine 176 are oxidised to a cystine. A helical transmembrane segment spans residues 100-122 (NIWAAVDVLCCTASIMGLCIISI). The Cytoplasmic segment spans residues 123–143 (DRYIGVSYPLRYPTIVTQRRG). Residues 144–167 (VRALLCVWALSLVISIGPLFGWRQ) traverse the membrane as a helical segment. Residues 168–181 (QAPEDETICQINEE) lie on the Extracellular side of the membrane. The chain crosses the membrane as a helical span at residues 182 to 205 (PGYVLFSALGSFYVPLTIILVMYC). Residues 206-273 (RVYVVAKRES…FSREKKAAKT (68 aa)) lie on the Cytoplasmic side of the membrane. Serine 215 carries the post-translational modification Phosphoserine; by PKA. A helical membrane pass occupies residues 274–297 (LGIVVGCFVLCWLPFFLVMPIGSF). Over 298-305 (FPNFKPPE) the chain is Extracellular. Residues 306-329 (TVFKIVFWLGYLNSCINPIIYPCS) form a helical membrane-spanning segment. The Cytoplasmic segment spans residues 330–466 (SQEFKKAFQN…ISLGENGEEV (137 aa)). The short motif at 334 to 349 (KKAFQNVLRIQCLRRR) is the Nuclear localization signal element. Cysteine 345 is lipidated: S-palmitoyl cysteine.

It belongs to the G-protein coupled receptor 1 family. Adrenergic receptor subfamily. ADRA1A sub-subfamily. As to quaternary structure, homo- and heterooligomer. Heterooligomerizes with ADRA1B homooligomers in cardiac myocytes. Interacts with CAVIN4.

The protein localises to the nucleus membrane. The protein resides in the cell membrane. It localises to the cytoplasm. It is found in the membrane. Its subcellular location is the caveola. Functionally, this alpha-adrenergic receptor mediates its action by association with G proteins that activate a phosphatidylinositol-calcium second messenger system. Its effect is mediated by G(q) and G(11) proteins. Nuclear ADRA1A-ADRA1B heterooligomers regulate phenylephrine (PE)-stimulated ERK signaling in cardiac myocytes. This Mus musculus (Mouse) protein is Alpha-1A adrenergic receptor (Adra1a).